The chain runs to 110 residues: MSIQNLNTFDPFADAIKGADYDVQDGLVHIRIQQRNGRKTLTTVQGLSAEYDLKKIVRACKKEFACNGTVIEHPEYGEVLQLQGDQRENICQWLTKSGLAKPEQLKVHGF.

This sequence belongs to the SUI1 family.

Its function is as follows. Probably involved in translation. The polypeptide is Eukaryotic translation initiation factor eIF1 (Anopheles gambiae (African malaria mosquito)).